A 111-amino-acid chain; its full sequence is uncharacterized protein (111 aa).

Transmembrane regions (helical) follow at residues 4–22, 49–71, and 91–108; these read FWIL…QFFI, LLIL…LFFI, and YMYH…LIYV.

It is found in the cell membrane. This is an uncharacterized protein from Bacillus subtilis (strain 168).